Here is a 423-residue protein sequence, read N- to C-terminus: MVVAILRVVSAIEIPIRLGFSEANWRFSSPKYDNLGRKKSRLSVYSLYTTSKYACVGFEAENNGKFLIRSSLVANPAGEATISSEQKVYDVVLKQAALVKDQTKSSRKSTDVKPDIVLPGTVYLLKDAYDRCGEVCAEYAKTFYLGTLLMTPERRRAIWAIYVWCRRTDELVDGHNASHITPSALDRWEARLEDLFAGRPYDMFDAALSDTVSRFPVDIQPFMDMVEGMRMDLKKSRYKNFDELYLYCYYVAGTVGLMSVPVMGIAPESLAEAESVYNAALALGIANQLTNILRDVGEDARRGRIYLPQDELAEAGLSDEDVFTGKVTDKWRSFMKRQIKRARTFFEQAEKGVTELSQASRWPVWASLLLYRQILDEIEANDYNNFTKRAYVSKVKRLAALPLAYGKSLLIPLSLRPPSLSKA.

Residues 1-136 (MVVAILRVVS…DAYDRCGEVC (136 aa)) constitute a chloroplast transit peptide.

The protein belongs to the phytoene/squalene synthase family. Monomer.

The protein localises to the plastid. Its subcellular location is the chloroplast. It catalyses the reaction 2 (2E,6E,10E)-geranylgeranyl diphosphate = 15-cis-phytoene + 2 diphosphate. Its pathway is carotenoid biosynthesis; phytoene biosynthesis; all-trans-phytoene from geranylgeranyl diphosphate: step 1/1. In terms of biological role, catalyzes the reaction from prephytoene diphosphate to phytoene. This Narcissus pseudonarcissus (Daffodil) protein is Phytoene synthase, chloroplastic (PSY).